We begin with the raw amino-acid sequence, 535 residues long: Dimethylaniline monooxygenase [N-oxide-forming] 2 (535 aa).

Alanine 2 carries the post-translational modification N-acetylalanine. Residues 9–13, glutamate 32, 40–41, and 61–62 contribute to the FAD site; these read GAGVS, LW, and NT. NADP(+) is bound by residues 60 to 61 and 195 to 198; these read TN and SASD. Lysine 492 participates in a covalent cross-link: Glycyl lysine isopeptide (Lys-Gly) (interchain with G-Cter in SUMO). Residues 510-530 traverse the membrane as a helical segment; it reads FPVSFLLKFLGLFALVLAFLF.

It belongs to the FMO family. The cofactor is FAD. It depends on Mg(2+) as a cofactor. As to expression, lung.

The protein localises to the microsome membrane. It is found in the endoplasmic reticulum membrane. The enzyme catalyses N,N-dimethylaniline + NADPH + O2 + H(+) = N,N-dimethylaniline N-oxide + NADP(+) + H2O. Functionally, catalyzes the oxidative metabolism of numerous xenobiotics, including mainly therapeutic drugs and insecticides that contain a soft nucleophile, most commonly nitrogen and sulfur and participates to their bioactivation. Most drug substrates are tertiary amines such as prochlorperazine and trifluoperazine which are N-oxygenated to form the N-oxide, or sulfides such as thiourea and ethionamide, which are S-oxygenated to the sulfoxide. Others include primary alkylamines such as N-dodecylamine and octan-1-amine that are sequentially monooxygenated to oximes through intermediate hydroxylamines and both steps are NADPH- and oxygen-dependent. Also metabolized N-Deacetyl ketoconazole (DAK) to N-hydroxy-DAK and appears to further metabolizes N-hydroxy-DAK to two others metabolites. Also catalyzes S-oxygenation of the thioether-containing organophosphate insecticides, phorate and disulfoton. The protein is Dimethylaniline monooxygenase [N-oxide-forming] 2 of Oryctolagus cuniculus (Rabbit).